The primary structure comprises 286 residues: Bifunctional protein FolD (286 aa).

NADP(+) contacts are provided by residues 165 to 167 (GRS) and serine 190.

This sequence belongs to the tetrahydrofolate dehydrogenase/cyclohydrolase family. Homodimer.

The enzyme catalyses (6R)-5,10-methylene-5,6,7,8-tetrahydrofolate + NADP(+) = (6R)-5,10-methenyltetrahydrofolate + NADPH. The catalysed reaction is (6R)-5,10-methenyltetrahydrofolate + H2O = (6R)-10-formyltetrahydrofolate + H(+). It participates in one-carbon metabolism; tetrahydrofolate interconversion. Functionally, catalyzes the oxidation of 5,10-methylenetetrahydrofolate to 5,10-methenyltetrahydrofolate and then the hydrolysis of 5,10-methenyltetrahydrofolate to 10-formyltetrahydrofolate. In Burkholderia lata (strain ATCC 17760 / DSM 23089 / LMG 22485 / NCIMB 9086 / R18194 / 383), this protein is Bifunctional protein FolD.